The primary structure comprises 366 residues: 3-dehydroquinate synthase (366 aa).

NAD(+) is bound by residues S74–K79, G108–D112, T132–T133, K144, K153, and F171–T174. Zn(2+) is bound by residues E186, H249, and H266.

It belongs to the sugar phosphate cyclases superfamily. Dehydroquinate synthase family. Co(2+) serves as cofactor. It depends on Zn(2+) as a cofactor. The cofactor is NAD(+).

It is found in the cytoplasm. The catalysed reaction is 7-phospho-2-dehydro-3-deoxy-D-arabino-heptonate = 3-dehydroquinate + phosphate. It functions in the pathway metabolic intermediate biosynthesis; chorismate biosynthesis; chorismate from D-erythrose 4-phosphate and phosphoenolpyruvate: step 2/7. Its function is as follows. Catalyzes the conversion of 3-deoxy-D-arabino-heptulosonate 7-phosphate (DAHP) to dehydroquinate (DHQ). The sequence is that of 3-dehydroquinate synthase from Geobacillus thermodenitrificans (strain NG80-2).